Consider the following 122-residue polypeptide: MIQTETRLTVADNSGAKELYCIKVLGGSKRRYAGIGDVIVVSVKEAIPNAKVKKGDVVKAVIVRTKKEVSRPDGSMIRFDDNSAVIINASNEPIGTRIFGPVARELRAKRFMKIISLAPEVL.

Belongs to the universal ribosomal protein uL14 family. Part of the 50S ribosomal subunit. Forms a cluster with proteins L3 and L19. In the 70S ribosome, L14 and L19 interact and together make contacts with the 16S rRNA in bridges B5 and B8.

Functionally, binds to 23S rRNA. Forms part of two intersubunit bridges in the 70S ribosome. The chain is Large ribosomal subunit protein uL14 from Desulforapulum autotrophicum (strain ATCC 43914 / DSM 3382 / VKM B-1955 / HRM2) (Desulfobacterium autotrophicum).